The primary structure comprises 635 residues: Threonine--tRNA ligase (635 aa).

Positions 1-61 constitute a TGS domain; that stretch reads MIKITLKDGK…HKDSSLEILT (61 aa). Residues 242–532 are catalytic; it reads DHRKLGKELD…LIEQYAGAFP (291 aa). Positions 333, 384, and 509 each coordinate Zn(2+).

This sequence belongs to the class-II aminoacyl-tRNA synthetase family. In terms of assembly, homodimer. Zn(2+) is required as a cofactor.

The protein resides in the cytoplasm. The catalysed reaction is tRNA(Thr) + L-threonine + ATP = L-threonyl-tRNA(Thr) + AMP + diphosphate + H(+). Functionally, catalyzes the attachment of threonine to tRNA(Thr) in a two-step reaction: L-threonine is first activated by ATP to form Thr-AMP and then transferred to the acceptor end of tRNA(Thr). Also edits incorrectly charged L-seryl-tRNA(Thr). This Clostridium botulinum (strain Langeland / NCTC 10281 / Type F) protein is Threonine--tRNA ligase.